The chain runs to 887 residues: MPILHQKIASTGGQPSTNSLALRRLPLVVIPRKRKYKNYVSRRRNTQLLASLRRCVSDPNVYKSYNHWKALLRPMTPIKSGAPTPKTVTPMPVPQIPPHQKMTPNPTPTQNPVQLPLPHAVSEKPGDKKSTGPTPSPVPSKAPISAAKLPGTVTKVAPLLSAAQPPPKTLAPAPGASETNSGSGPVSKQVSGKLTELKSKNGTVTEKTEKAVLRIPSSASTRAKAASAVAPEANPAPVPTATKPSPFAPAIAPLRDGAPAQPPAPIQASAPLRPPVAKQNSLQKPPEPKRSVGAPPKALPSELVNKIDGIEFLPQSSNQNTDDGQQPTTSTGGAKALRRAYGSKSGTTICAIGSPNVPSTSQPQQGDNEKRLIEKKLSLRKKKLSGEGVPPAGSMLTGSKSGVEIGLSSNLTTTNNNNNKEQTDEQRAKKTVNAVAAAFSTQAGSGNATTVDDPASTTTSKENPAAQPPKPKSAAVQNLISQLQLPASVSAKVDKIIACGDKARKPSRSGLQASQARPKVPEIVSSQRTQHQDDKDGHLIYSKGDFILNRFTIYDTLGEGTFGKVVRVNDSLSDTFMALKIIKNVSKYREAAKLEVKVLQKLAEKDPEKKNWVIHMGSYFDYNGHICLLFDLMGSSIFDFLKANHYKPYPMEQTLHITWQLCNAVKFLHDNKLTHTDLKPENILFVDSRYTTKLVDKKPLRVLHSTHVRLIDFGSATFDHEHHSIIVSTRHYRAPEVILELGWSQPCDVWSIGCILYELYTGVTLFQTHENREHLAMMERVLGDIPLRMAKRTKTKFFINGRLDWVNTSADAAYVRDNCKPLRRSMSCTDPEHVELFELIENMLMFEPLARMKLPEALQHRYFNRLPENLKIPCKMDASTNPRINGD.

Disordered stretches follow at residues 77 to 147 (PIKS…ISAA), 163 to 299 (AQPP…PKAL), 313 to 333 (LPQS…STGG), 347 to 475 (TTIC…KSAA), and 504 to 533 (RKPS…QHQD). The span at 108–118 (PTQNPVQLPLP) shows a compositional bias: low complexity. Basic and acidic residues predominate over residues 121 to 130 (VSEKPGDKKS). The span at 177 to 192 (SETNSGSGPVSKQVSG) shows a compositional bias: polar residues. Low complexity predominate over residues 217–241 (SSASTRAKAASAVAPEANPAPVPTA). Polar residues-rich tracts occupy residues 314–332 (PQSS…TSTG) and 356–366 (NVPSTSQPQQG). Residues 367–377 (DNEKRLIEKKL) show a composition bias toward basic and acidic residues. The span at 407 to 419 (LSSNLTTTNNNNN) shows a compositional bias: low complexity. Residues 439-462 (FSTQAGSGNATTVDDPASTTTSKE) are compositionally biased toward polar residues. Residues 551 to 863 (FTIYDTLGEG…LPEALQHRYF (313 aa)) enclose the Protein kinase domain. ATP contacts are provided by residues 557-565 (LGEGTFGKV) and Lys580. Residue Asp677 is the Proton acceptor of the active site.

Belongs to the protein kinase superfamily. CMGC Ser/Thr protein kinase family. Lammer subfamily. In terms of tissue distribution, expressed in body wall, vulval and anal depressor muscles.

It localises to the cytoplasm. It is found in the nucleus. Functionally, probable dual specificity kinase acting on both serine/threonine and tyrosine-containing substrates. Negatively regulates p38 MAPK signaling to allow for the plasma membrane of body wall muscle cells to form projections, also called muscle arms, that extend and connect the body wall muscles to target motor neurons. Negative regulation of p38 MAPK signaling may in turn modulate the trafficking of the muscle specific receptor eva-1 to the lysosome, to ensure proper display of the eva-1 receptor on the plasma membrane of muscle cells and allow for muscle arm extension towards guidance cues. The protein is Probable dual specificity protein kinase madd-3 of Caenorhabditis elegans.